The following is a 163-amino-acid chain: Allophycocyanin alpha-B chain (163 aa).

At asparagine 71 the chain carries N4-methylasparagine. (2R,3E)-phycocyanobilin is bound at residue cysteine 81.

The protein belongs to the phycobiliprotein family. As to quaternary structure, heterodimer of an alpha and a beta chain. Contains one covalently linked bilin chromophore.

The protein localises to the cellular thylakoid membrane. Its function is as follows. Light-harvesting photosynthetic bile pigment-protein from the phycobiliprotein complex. Allophycocyanin has a maximum absorption at approximately 650 nanometers. This chain is Allophycocyanin alpha-B chain, found in Synechococcus sp. (strain ATCC 27144 / PCC 6301 / SAUG 1402/1) (Anacystis nidulans).